Consider the following 503-residue polypeptide: Maturase K (503 aa).

It belongs to the intron maturase 2 family. MatK subfamily.

It is found in the plastid. It localises to the chloroplast. Its function is as follows. Usually encoded in the trnK tRNA gene intron. Probably assists in splicing its own and other chloroplast group II introns. The polypeptide is Maturase K (Agonis flexuosa (Australian willow myrtle)).